A 495-amino-acid chain; its full sequence is UDP-N-acetylmuramate--L-alanine ligase (495 aa).

122–128 (GTHGKTT) contributes to the ATP binding site.

The protein belongs to the MurCDEF family.

It localises to the cytoplasm. The enzyme catalyses UDP-N-acetyl-alpha-D-muramate + L-alanine + ATP = UDP-N-acetyl-alpha-D-muramoyl-L-alanine + ADP + phosphate + H(+). It participates in cell wall biogenesis; peptidoglycan biosynthesis. Functionally, cell wall formation. This chain is UDP-N-acetylmuramate--L-alanine ligase, found in Mycobacterium leprae (strain TN).